Here is a 508-residue protein sequence, read N- to C-terminus: Bifunctional NAD(P)H-hydrate repair enzyme Nnr (508 aa).

An NAD(P)H-hydrate epimerase region spans residues 1–224 (MSGLCACTLV…QVRSVLGEDH (224 aa)). Positions 15-217 (VQQLEAALFA…EIGFSEAQVR (203 aa)) constitute a YjeF N-terminal domain. The interval 64–68 (HNGGD) is NADPHX 1; for epimerase activity. K(+) is bound by residues Asn65 and Asp126. The tract at residues 130–136 (GFGLERP) is NADPHX 1; for epimerase activity. Tyr141 and Asp159 together coordinate (6S)-NADPHX. Ser162 is a K(+) binding site. A YjeF C-terminal domain is found at 232-506 (PDAARAGLPL…LGLLPFLAAD (275 aa)). The segment at 232-508 (PDAARAGLPL…LLPFLAADGP (277 aa)) is ADP-dependent (S)-NAD(P)H-hydrate dehydratase. Residue Gly334 participates in (6S)-NADPHX binding. An NADPHX 2; for dehydratase activity region spans residues 383–389 (HPGEFKR). ADP contacts are provided by residues 417–421 (KGART) and 437–446 (SPALARGGSG). Asp447 serves as a coordination point for (6S)-NADPHX.

In the N-terminal section; belongs to the NnrE/AIBP family. It in the C-terminal section; belongs to the NnrD/CARKD family. The cofactor is K(+).

The catalysed reaction is (6S)-NADHX + ADP = AMP + phosphate + NADH + H(+). The enzyme catalyses (6S)-NADPHX + ADP = AMP + phosphate + NADPH + H(+). It carries out the reaction (6R)-NADHX = (6S)-NADHX. It catalyses the reaction (6R)-NADPHX = (6S)-NADPHX. Its function is as follows. Bifunctional enzyme that catalyzes the epimerization of the S- and R-forms of NAD(P)HX and the dehydration of the S-form of NAD(P)HX at the expense of ADP, which is converted to AMP. This allows the repair of both epimers of NAD(P)HX, a damaged form of NAD(P)H that is a result of enzymatic or heat-dependent hydration. The protein is Bifunctional NAD(P)H-hydrate repair enzyme Nnr (nnr) of Gloeobacter violaceus (strain ATCC 29082 / PCC 7421).